We begin with the raw amino-acid sequence, 280 residues long: 4-hydroxy-3-methylbut-2-enyl diphosphate reductase (280 aa).

Cysteine 12 is a binding site for [4Fe-4S] cluster. (2E)-4-hydroxy-3-methylbut-2-enyl diphosphate contacts are provided by histidine 40 and histidine 72. Dimethylallyl diphosphate contacts are provided by histidine 40 and histidine 72. Histidine 40 and histidine 72 together coordinate isopentenyl diphosphate. Position 94 (cysteine 94) interacts with [4Fe-4S] cluster. A (2E)-4-hydroxy-3-methylbut-2-enyl diphosphate-binding site is contributed by histidine 122. Histidine 122 is a dimethylallyl diphosphate binding site. Histidine 122 is a binding site for isopentenyl diphosphate. The active-site Proton donor is the glutamate 124. Threonine 160 is a binding site for (2E)-4-hydroxy-3-methylbut-2-enyl diphosphate. Cysteine 188 contacts [4Fe-4S] cluster. Residues serine 216, asparagine 218, and serine 260 each coordinate (2E)-4-hydroxy-3-methylbut-2-enyl diphosphate. Dimethylallyl diphosphate is bound by residues serine 216, asparagine 218, and serine 260. Residues serine 216, asparagine 218, and serine 260 each coordinate isopentenyl diphosphate.

The protein belongs to the IspH family. The cofactor is [4Fe-4S] cluster.

The enzyme catalyses isopentenyl diphosphate + 2 oxidized [2Fe-2S]-[ferredoxin] + H2O = (2E)-4-hydroxy-3-methylbut-2-enyl diphosphate + 2 reduced [2Fe-2S]-[ferredoxin] + 2 H(+). It catalyses the reaction dimethylallyl diphosphate + 2 oxidized [2Fe-2S]-[ferredoxin] + H2O = (2E)-4-hydroxy-3-methylbut-2-enyl diphosphate + 2 reduced [2Fe-2S]-[ferredoxin] + 2 H(+). Its pathway is isoprenoid biosynthesis; dimethylallyl diphosphate biosynthesis; dimethylallyl diphosphate from (2E)-4-hydroxy-3-methylbutenyl diphosphate: step 1/1. It functions in the pathway isoprenoid biosynthesis; isopentenyl diphosphate biosynthesis via DXP pathway; isopentenyl diphosphate from 1-deoxy-D-xylulose 5-phosphate: step 6/6. In terms of biological role, catalyzes the conversion of 1-hydroxy-2-methyl-2-(E)-butenyl 4-diphosphate (HMBPP) into a mixture of isopentenyl diphosphate (IPP) and dimethylallyl diphosphate (DMAPP). Acts in the terminal step of the DOXP/MEP pathway for isoprenoid precursor biosynthesis. This Trichlorobacter lovleyi (strain ATCC BAA-1151 / DSM 17278 / SZ) (Geobacter lovleyi) protein is 4-hydroxy-3-methylbut-2-enyl diphosphate reductase.